Reading from the N-terminus, the 525-residue chain is AarF domain-containing protein kinase 1 (525 aa).

A Protein kinase domain is found at 148–477; it reads SFDDTPLGAA…HKKRDAGSFF (330 aa). Residues 154–162 and K176 each bind ATP; that span reads LGAASLAQV. Residue D308 is the Proton acceptor of the active site.

The protein belongs to the protein kinase superfamily. ADCK protein kinase family.

The protein resides in the mitochondrion. Functionally, appears to be essential for maintaining mitochondrial cristae formation and mitochondrial function by acting via YME1L1 in a kinase-independent manner to regulate essential mitochondrial structural proteins OPA1 and IMMT. The action of this enzyme is not yet clear. It is not known if it has protein kinase activity and what type of substrate it would phosphorylate (Ser, Thr or Tyr). In Mus musculus (Mouse), this protein is AarF domain-containing protein kinase 1 (Adck1).